We begin with the raw amino-acid sequence, 357 residues long: UDP-N-acetylglucosamine--N-acetylmuramyl-(pentapeptide) pyrophosphoryl-undecaprenol N-acetylglucosamine transferase (357 aa).

Residues 13–15 (SAG), Arg166, Ser196, and Gln291 each bind UDP-N-acetyl-alpha-D-glucosamine.

This sequence belongs to the glycosyltransferase 28 family. MurG subfamily.

The protein localises to the cell membrane. The catalysed reaction is di-trans,octa-cis-undecaprenyl diphospho-N-acetyl-alpha-D-muramoyl-L-alanyl-D-glutamyl-meso-2,6-diaminopimeloyl-D-alanyl-D-alanine + UDP-N-acetyl-alpha-D-glucosamine = di-trans,octa-cis-undecaprenyl diphospho-[N-acetyl-alpha-D-glucosaminyl-(1-&gt;4)]-N-acetyl-alpha-D-muramoyl-L-alanyl-D-glutamyl-meso-2,6-diaminopimeloyl-D-alanyl-D-alanine + UDP + H(+). It participates in cell wall biogenesis; peptidoglycan biosynthesis. In terms of biological role, cell wall formation. Catalyzes the transfer of a GlcNAc subunit on undecaprenyl-pyrophosphoryl-MurNAc-pentapeptide (lipid intermediate I) to form undecaprenyl-pyrophosphoryl-MurNAc-(pentapeptide)GlcNAc (lipid intermediate II). This chain is UDP-N-acetylglucosamine--N-acetylmuramyl-(pentapeptide) pyrophosphoryl-undecaprenol N-acetylglucosamine transferase, found in Clostridium perfringens (strain SM101 / Type A).